Here is a 635-residue protein sequence, read N- to C-terminus: MNLKTAYEPYFKIGAAISRWNLHTPAHTKLLAEQFNSFTCENDMKPMYYLDREANKKDPEKYNLSPALTFENAIPYLEFAKDNKIAMRGHTLVWHNQTPKWFFCERYNENFPMADRETILARLESYIHGVLDFVQTNYPGIIYAWDVVNEIVDEGAFRKSIWTETVGEDFFIKAFEFARKYAAPEVSLFYNDYETAQPWKRDFILEKVLGPLIDKKLIDGMGMQSHLLMDHPDISEYRTALEMYGSTGLQIHITELDMHNADPSEESMHALATRYQEFFQTYLDAKKSGKANITSVTFWNLLDENSWLSGFRRETSYPLVFKGKCEAKEAYYAVLKAAVSDDSIDKWVPDYSEEDYKLQGMPTPDIKRFRENIWQENEYNYEASYGFIPNLFAYLHNDDVKRDCMLVIPGGGYCMCCSHEGELAAMEFYNRGMNAFVLSYTTDITMSVPLHKQPLEDISRAVRFIRKNASKYNIDGKKLVIMGFSAGSHVCGSLAVHFDDVKDNNPEYADISGRPDGVILSYPVITTGRYTHADSVRTLLGANPTDEELTYFSLEKQVKDNTPPCFIWQTEEDSVVPVENSYLFANALREKKIPFAHYVFPRGFHGLTVANDEFFSGWSGGEYSMEQTMRARFAV.

The 337-residue stretch at Met1–Ala337 folds into the GH10 domain. The active-site Proton donor is Glu150. Glu255 serves as the catalytic Nucleophile.

Belongs to the glycosyl hydrolase 10 (cellulase F) family.

The enzyme catalyses Endohydrolysis of (1-&gt;4)-beta-D-xylosidic linkages in xylans.. Its pathway is glycan degradation; xylan degradation. B.fibrisolvens is located in the rumen of ruminant animals, where it contributes to the animal's digestion of plant material by hydrolyzing hemicellulose with its xylanases. The protein is Endo-1,4-beta-xylanase B (xynB) of Butyrivibrio fibrisolvens.